A 72-amino-acid polypeptide reads, in one-letter code: QVFDQACKGIYDRAIFKKLDRVCDDCYNLYRKPYVATTCRQNCYANSVFRQCLDDLLLIDVVDEYISGVQIV.

The residue at position 1 (Gln-1) is a Pyrrolidone carboxylic acid. Residue Phe-3 is modified to D-phenylalanine. 3 disulfide bridges follow: Cys-7–Cys-43, Cys-23–Cys-39, and Cys-26–Cys-52. Val-72 carries the valine amide modification.

In terms of tissue distribution, produced by the medulla terminalis X-organ in the eyestalks and transported to the sinus gland where they are stored and released.

It localises to the secreted. In terms of biological role, hormone found in the sinus gland of isopods and decapods which controls the blood sugar level. Has a secretagogue action over the amylase released from the midgut gland. May act as a stress hormone and may be involved in the control of molting and reproduction. The polypeptide is Crustacean hyperglycemic hormone (Astacus astacus (Noble crayfish)).